The chain runs to 397 residues: Ubiquitin-like modifier-activating enzyme 5 (397 aa).

Residues G76, D97, K120, N143, and N177 each coordinate ATP. Positions 219 and 222 each coordinate Zn(2+). The Glycyl thioester intermediate role is filled by C243. The Zn(2+) site is built by C296 and C301. The UFM1-interacting sequence (UIS) signature appears at 327 to 339; it reads IVHEDNDWGIELV. The interval 340–370 is linker; it reads SETTEDELKAASGPVPDLPVGITVAYTIPNK. The UFC1-binding sequence (UFC) signature appears at 382–397; it reads ESEESLEDLMAKMRNL.

It belongs to the ubiquitin-activating E1 family. UBA5 subfamily. Homodimer; homodimerization is required for UFM1 activation. Interacts (via UIS motif) with UFM1; binds UFM1 via a trans-binding mechanism in which UFM1 interacts with distinct sites in both subunits of the UBA5 homodimer. Interacts (via C-terminus) with UFC1.

Its subcellular location is the cytoplasm. It is found in the nucleus. It localises to the endoplasmic reticulum membrane. The protein resides in the golgi apparatus. E1-like enzyme which specifically catalyzes the first step in ufmylation. Activates UFM1 by first adenylating its C-terminal glycine residue with ATP, and thereafter linking this residue to the side chain of a cysteine residue in E1, yielding a UFM1-E1 thioester and free AMP. Activates UFM1 via a trans-binding mechanism, in which UFM1 interacts with distinct sites in both subunits of the UBA5 homodimer. Trans-binding also promotes stabilization of the UBA5 homodimer, and enhances ATP-binding. Transfer of UFM1 from UBA5 to the E2-like enzyme UFC1 also takes place using a trans mechanism. Ufmylation plays a key role in various processes, such as ribosome recycling, response to DNA damage, interferon response or reticulophagy (also called ER-phagy). The polypeptide is Ubiquitin-like modifier-activating enzyme 5 (Gallus gallus (Chicken)).